The sequence spans 170 residues: Cilia- and flagella-associated protein 276 (170 aa).

Disordered regions lie at residues 1-37 (MPLTRDPFQNPALDKDDSYLGKSRASKKLPYKNPTHL) and 151-170 (HTAATNGGYSRKNDGGFFST).

As to quaternary structure, microtubule inner protein component of sperm flagellar doublet microtubules. In terms of tissue distribution, expressed in trachea multiciliated cells.

The protein resides in the cytoplasm. Its subcellular location is the cytoskeleton. It is found in the cilium axoneme. It localises to the flagellum axoneme. Microtubule inner protein (MIP) part of the dynein-decorated doublet microtubules (DMTs) in cilia axoneme, which is required for motile cilia beating. May play an important role for the maintenance of myelin-axon integrity. May affect intracellular Ca(2+) homeostasis. The chain is Cilia- and flagella-associated protein 276 from Bos taurus (Bovine).